Here is a 174-residue protein sequence, read N- to C-terminus: Cytochrome c-type biogenesis protein CcmE (174 aa).

At 1-7 the chain is on the cytoplasmic side; it reads MTRKSRR. A helical; Signal-anchor for type II membrane protein transmembrane segment spans residues 8–28; sequence LILIGAGLGVLALAAGLILTA. The Periplasmic portion of the chain corresponds to 29–174; that stretch reads LNDTIVFFRT…PAVSPARSTP (146 aa). Residues His-121 and Tyr-125 each contribute to the heme site. A compositionally biased stretch (basic and acidic residues) spans 130–144; the sequence is VADALKKSGHWKEGE. The tract at residues 130-174 is disordered; the sequence is VADALKKSGHWKEGEEGGPVPPAAKTPGPQSSAAPPAVSPARSTP. Low complexity predominate over residues 156–174; that stretch reads PGPQSSAAPPAVSPARSTP.

The protein belongs to the CcmE/CycJ family.

The protein localises to the cell inner membrane. Heme chaperone required for the biogenesis of c-type cytochromes. Transiently binds heme delivered by CcmC and transfers the heme to apo-cytochromes in a process facilitated by CcmF and CcmH. This is Cytochrome c-type biogenesis protein CcmE from Azorhizobium caulinodans (strain ATCC 43989 / DSM 5975 / JCM 20966 / LMG 6465 / NBRC 14845 / NCIMB 13405 / ORS 571).